Here is a 760-residue protein sequence, read N- to C-terminus: Golgin subfamily A member 5 (760 aa).

Residues 1–727 (MSWFVDLAGK…IFLRRYPMAR (727 aa)) are Cytoplasmic-facing. The span at 95-111 (VSSTTPLGSSSKASSNF) shows a compositional bias: polar residues. Disordered regions lie at residues 95 to 114 (VSST…FVRP), 126 to 216 (DFLN…SQAD), and 432 to 456 (TEEK…EYTK). A compositionally biased stretch (basic and acidic residues) spans 135–146 (QSEKKEVRRETV). Residues 148–166 (KAFSPTGVSAQSQMPTVSL) are compositionally biased toward polar residues. The segment covering 174 to 201 (PSVTPTPSSTQGLSRNSSLGSLSSSSHS) has biased composition (low complexity). The stretch at 249 to 668 (QGQEHVISNL…LQGGQNSASH (420 aa)) forms a coiled coil. A compositionally biased stretch (polar residues) spans 441–450 (LQQQAKSSRS). Residues 728-748 (VFVIIYMALLHLWVMIVLLTY) traverse the membrane as a helical; Anchor for type IV membrane protein segment. The Extracellular portion of the chain corresponds to 749-760 (TPEMHHSHPDGR).

The protein localises to the golgi apparatus membrane. Involved in maintaining Golgi structure. Stimulates the formation of Golgi stacks and ribbons. Involved in intra-Golgi retrograde transport. In Danio rerio (Zebrafish), this protein is Golgin subfamily A member 5 (golga5).